We begin with the raw amino-acid sequence, 696 residues long: Two-component response regulator ORR22 (696 aa).

The Response regulatory domain occupies 27 to 142 (RVLAVDDDPV…ELRNIWQHVV (116 aa)). D78 is modified (4-aspartylphosphate). The interval 154-214 (LDFSKECNKP…DYQENDEPSA (61 aa)) is disordered. Polar residues predominate over residues 176–185 (TCGSSDQNGR). The segment covering 195–211 (GEDDDEGDDNDYQENDE) has biased composition (acidic residues). A DNA-binding region (myb-like GARP) is located at residues 214–273 (AAKKPRVVWSVELHRKFVAAVNQLGIDKAVPKRILELMNVEKLTRENVASHLQKYRLYLK).

It belongs to the ARR family. Type-B subfamily. In terms of processing, two-component system major event consists of a His-to-Asp phosphorelay between a sensor histidine kinase (HK) and a response regulator (RR). In plants, the His-to-Asp phosphorelay involves an additional intermediate named Histidine-containing phosphotransfer protein (HPt). This multistep phosphorelay consists of a His-Asp-His-Asp sequential transfer of a phosphate group between first a His and an Asp of the HK protein, followed by the transfer to a conserved His of the HPt protein and finally the transfer to an Asp in the receiver domain of the RR protein.

It is found in the nucleus. In terms of biological role, transcriptional activator that binds specific DNA sequence. Functions as a response regulator involved in His-to-Asp phosphorelay signal transduction system. Phosphorylation of the Asp residue in the receiver domain activates the ability of the protein to promote the transcription of target genes. May directly activate some type-A response regulators in response to cytokinins. The protein is Two-component response regulator ORR22 of Oryza sativa subsp. indica (Rice).